We begin with the raw amino-acid sequence, 337 residues long: 4-hydroxythreonine-4-phosphate dehydrogenase (337 aa).

Residues H139 and T140 each coordinate substrate. H173, H218, and H273 together coordinate a divalent metal cation. Positions 281, 290, and 299 each coordinate substrate.

Belongs to the PdxA family. As to quaternary structure, homodimer. Zn(2+) is required as a cofactor. The cofactor is Mg(2+). Co(2+) serves as cofactor.

The protein resides in the cytoplasm. It catalyses the reaction 4-(phosphooxy)-L-threonine + NAD(+) = 3-amino-2-oxopropyl phosphate + CO2 + NADH. The protein operates within cofactor biosynthesis; pyridoxine 5'-phosphate biosynthesis; pyridoxine 5'-phosphate from D-erythrose 4-phosphate: step 4/5. Catalyzes the NAD(P)-dependent oxidation of 4-(phosphooxy)-L-threonine (HTP) into 2-amino-3-oxo-4-(phosphooxy)butyric acid which spontaneously decarboxylates to form 3-amino-2-oxopropyl phosphate (AHAP). The protein is 4-hydroxythreonine-4-phosphate dehydrogenase of Rhodopseudomonas palustris (strain ATCC BAA-98 / CGA009).